Reading from the N-terminus, the 846-residue chain is Sucrose synthase 6 (846 aa).

Residues 276–755 are GT-B glycosyltransferase; the sequence is CVFTVVIFSI…GLQRIYECYT (480 aa).

This sequence belongs to the glycosyltransferase 1 family. Plant sucrose synthase subfamily.

It carries out the reaction an NDP-alpha-D-glucose + D-fructose = a ribonucleoside 5'-diphosphate + sucrose + H(+). In terms of biological role, sucrose-cleaving enzyme that provides UDP-glucose and fructose for various metabolic pathways. This chain is Sucrose synthase 6 (SUS6), found in Oryza sativa subsp. japonica (Rice).